Here is a 274-residue protein sequence, read N- to C-terminus: uncharacterized protein (274 aa).

This is an uncharacterized protein from Bacillus subtilis (strain 168).